A 232-amino-acid polypeptide reads, in one-letter code: Ribose-5-phosphate isomerase A (232 aa).

Substrate contacts are provided by residues 31–34 (TGST), 87–90 (DGAD), and 100–103 (KGGG). Residue E109 is the Proton acceptor of the active site. K127 is a substrate binding site.

Belongs to the ribose 5-phosphate isomerase family. As to quaternary structure, homodimer.

The enzyme catalyses aldehydo-D-ribose 5-phosphate = D-ribulose 5-phosphate. The protein operates within carbohydrate degradation; pentose phosphate pathway; D-ribose 5-phosphate from D-ribulose 5-phosphate (non-oxidative stage): step 1/1. Functionally, catalyzes the reversible conversion of ribose-5-phosphate to ribulose 5-phosphate. In Bifidobacterium longum (strain NCC 2705), this protein is Ribose-5-phosphate isomerase A.